A 152-amino-acid polypeptide reads, in one-letter code: Transcriptional regulator MraZ (152 aa).

2 SpoVT-AbrB domains span residues 5-52 and 81-124; these read ASAV…PLNQ and ATEC…SESE.

It belongs to the MraZ family. As to quaternary structure, forms oligomers.

The protein localises to the cytoplasm. Its subcellular location is the nucleoid. This chain is Transcriptional regulator MraZ, found in Histophilus somni (strain 2336) (Haemophilus somnus).